A 75-amino-acid polypeptide reads, in one-letter code: Small ribosomal subunit protein bS16 (75 aa).

It belongs to the bacterial ribosomal protein bS16 family.

This Campylobacter lari (strain RM2100 / D67 / ATCC BAA-1060) protein is Small ribosomal subunit protein bS16.